Consider the following 480-residue polypeptide: Cytochrome b-c1 complex subunit 1, mitochondrial (480 aa).

Residues 1 to 34 constitute a mitochondrion transit peptide; it reads MAASAVCRAACSGTQVLLRTRRSPALLRLPALRG. N6-acetyllysine occurs at positions 111 and 138. N6-acetyllysine; alternate is present on Lys163. Lys163 carries the N6-succinyllysine; alternate modification. Residue Ser212 is modified to Phosphoserine. Thr214 carries the post-translational modification Phosphothreonine. An N6-acetyllysine modification is found at Lys248.

It belongs to the peptidase M16 family. UQCRC1/QCR1 subfamily. Component of the ubiquinol-cytochrome c oxidoreductase (cytochrome b-c1 complex, complex III, CIII), a multisubunit enzyme composed of 11 subunits. The complex is composed of 3 respiratory subunits cytochrome b, cytochrome c1 and Rieske protein UQCRFS1, 2 core protein subunits UQCRC1/QCR1 and UQCRC2/QCR2, and 6 low-molecular weight protein subunits UQCRH/QCR6, UQCRB/QCR7, UQCRQ/QCR8, UQCR10/QCR9, UQCR11/QCR10 and subunit 9, the cleavage product of Rieske protein UQCRFS1. The complex exists as an obligatory dimer and forms supercomplexes (SCs) in the inner mitochondrial membrane with NADH-ubiquinone oxidoreductase (complex I, CI) and cytochrome c oxidase (complex IV, CIV), resulting in different assemblies (supercomplex SCI(1)III(2)IV(1) and megacomplex MCI(2)III(2)IV(2)). Interacts with UQCC6. Interacts with STMP1. Post-translationally, acetylation of Lys-138 is observed in liver mitochondria from fasted mice but not from fed mice. Expressed in neurons and astrocytes of the cerebral cortex and hippocampus (at protein level).

Its subcellular location is the mitochondrion inner membrane. Component of the ubiquinol-cytochrome c oxidoreductase, a multisubunit transmembrane complex that is part of the mitochondrial electron transport chain which drives oxidative phosphorylation. The respiratory chain contains 3 multisubunit complexes succinate dehydrogenase (complex II, CII), ubiquinol-cytochrome c oxidoreductase (cytochrome b-c1 complex, complex III, CIII) and cytochrome c oxidase (complex IV, CIV), that cooperate to transfer electrons derived from NADH and succinate to molecular oxygen, creating an electrochemical gradient over the inner membrane that drives transmembrane transport and the ATP synthase. The cytochrome b-c1 complex catalyzes electron transfer from ubiquinol to cytochrome c, linking this redox reaction to translocation of protons across the mitochondrial inner membrane, with protons being carried across the membrane as hydrogens on the quinol. In the process called Q cycle, 2 protons are consumed from the matrix, 4 protons are released into the intermembrane space and 2 electrons are passed to cytochrome c. The 2 core subunits UQCRC1/QCR1 and UQCRC2/QCR2 are homologous to the 2 mitochondrial-processing peptidase (MPP) subunits beta-MPP and alpha-MPP respectively, and they seem to have preserved their MPP processing properties. May be involved in the in situ processing of UQCRFS1 into the mature Rieske protein and its mitochondrial targeting sequence (MTS)/subunit 9 when incorporated into complex III. Seems to play an important role in the maintenance of proper mitochondrial function in nigral dopaminergic neurons. This chain is Cytochrome b-c1 complex subunit 1, mitochondrial (Uqcrc1), found in Mus musculus (Mouse).